Here is a 1024-residue protein sequence, read N- to C-terminus: Beta-galactosidase (1024 aa).

2 residues coordinate substrate: asparagine 103 and aspartate 202. Aspartate 202 is a Na(+) binding site. Positions 417, 419, and 462 each coordinate Mg(2+). Substrate is bound by residues glutamate 462 and 538-541; that span reads EYAH. The active-site Proton donor is the glutamate 462. The active-site Nucleophile is glutamate 538. A Mg(2+)-binding site is contributed by asparagine 598. Na(+) contacts are provided by phenylalanine 602 and asparagine 605. Substrate-binding residues include asparagine 605 and tryptophan 1000.

This sequence belongs to the glycosyl hydrolase 2 family. In terms of assembly, homotetramer. Mg(2+) is required as a cofactor. It depends on Na(+) as a cofactor.

It carries out the reaction Hydrolysis of terminal non-reducing beta-D-galactose residues in beta-D-galactosides.. In Escherichia coli O1:K1 / APEC, this protein is Beta-galactosidase.